The sequence spans 137 residues: Large ribosomal subunit protein uL16 (137 aa).

Belongs to the universal ribosomal protein uL16 family. As to quaternary structure, part of the 50S ribosomal subunit.

Binds 23S rRNA and is also seen to make contacts with the A and possibly P site tRNAs. In Psychrobacter cryohalolentis (strain ATCC BAA-1226 / DSM 17306 / VKM B-2378 / K5), this protein is Large ribosomal subunit protein uL16.